We begin with the raw amino-acid sequence, 443 residues long: Ribosomal protein uS12 methylthiotransferase RimO (443 aa).

Residues 9–119 (PKIGMVSLGC…VVSAVHDAAP (111 aa)) form the MTTase N-terminal domain. Residues Cys-18, Cys-54, Cys-83, Cys-150, Cys-154, and Cys-157 each contribute to the [4Fe-4S] cluster site. The region spanning 136–373 (LTPRHYSYLK…MEKAAQISEA (238 aa)) is the Radical SAM core domain. One can recognise a TRAM domain in the interval 376-443 (QAKIGRDIAT…EHDLFGVALS (68 aa)).

It belongs to the methylthiotransferase family. RimO subfamily. It depends on [4Fe-4S] cluster as a cofactor.

Its subcellular location is the cytoplasm. The catalysed reaction is L-aspartate(89)-[ribosomal protein uS12]-hydrogen + (sulfur carrier)-SH + AH2 + 2 S-adenosyl-L-methionine = 3-methylsulfanyl-L-aspartate(89)-[ribosomal protein uS12]-hydrogen + (sulfur carrier)-H + 5'-deoxyadenosine + L-methionine + A + S-adenosyl-L-homocysteine + 2 H(+). Functionally, catalyzes the methylthiolation of an aspartic acid residue of ribosomal protein uS12. This Zymomonas mobilis subsp. mobilis (strain ATCC 31821 / ZM4 / CP4) protein is Ribosomal protein uS12 methylthiotransferase RimO.